Consider the following 112-residue polypeptide: Nucleoid-associated protein Pfl01_1806 (112 aa).

It belongs to the YbaB/EbfC family. Homodimer.

It is found in the cytoplasm. The protein localises to the nucleoid. In terms of biological role, binds to DNA and alters its conformation. May be involved in regulation of gene expression, nucleoid organization and DNA protection. The chain is Nucleoid-associated protein Pfl01_1806 from Pseudomonas fluorescens (strain Pf0-1).